The sequence spans 454 residues: MNLDDTIVAIATPPGRGGIGVVRLAGPEARTVALLMLRLANGKAELEAQRAHFAELVDPESGERLDEVVVAYFAKPHSYTTDDIVEISCHGSPVLLARVVELALAKGVRMADPGEFTMRAFLNGRIDLTQAEAVRDLIESQTLYQARVAAQQLGGSVSRRLQPTKQKLVNLIAVLEAGIDFADDDVSVLPAKEAIARIAEVHEPLAKLKEGFAFGKVVHEGLTLAIVGRPNVGKSSLFNRLVERDRAIVTAIPGTTRDLVTETVSLGGIPVHLVDTAGIRESHDEAESIGIQKSREAMADADLVLVVVDAHAETGHELDHQLISAAAERSAILVENKIDLGRHSVANGKSIPVVRTSAVSGEGIAELREQILRMVSGESGREESGFLTNIRQHQLVTDSLAALEAATNALEVRVPHEMVLMDLYNALRPLDDITGATTADDILNLIFSTFCIGK.

Residues R23, E86, and R125 each contribute to the (6S)-5-formyl-5,6,7,8-tetrahydrofolate site. The TrmE-type G domain occupies 221–376 (GLTLAIVGRP…LREQILRMVS (156 aa)). Residue N231 coordinates K(+). GTP contacts are provided by residues 231 to 236 (NVGKSS), 250 to 256 (TAIPGTT), and 275 to 278 (DTAG). A Mg(2+)-binding site is contributed by S235. 3 residues coordinate K(+): T250, I252, and T255. A Mg(2+)-binding site is contributed by T256. K454 is a binding site for (6S)-5-formyl-5,6,7,8-tetrahydrofolate.

This sequence belongs to the TRAFAC class TrmE-Era-EngA-EngB-Septin-like GTPase superfamily. TrmE GTPase family. In terms of assembly, homodimer. Heterotetramer of two MnmE and two MnmG subunits. It depends on K(+) as a cofactor.

Its subcellular location is the cytoplasm. Functionally, exhibits a very high intrinsic GTPase hydrolysis rate. Involved in the addition of a carboxymethylaminomethyl (cmnm) group at the wobble position (U34) of certain tRNAs, forming tRNA-cmnm(5)s(2)U34. The protein is tRNA modification GTPase MnmE of Koribacter versatilis (strain Ellin345).